The sequence spans 199 residues: V-set and transmembrane domain-containing protein 5 (199 aa).

The N-terminal stretch at 1–27 (MRPLRCGERTQGIPLGLLAFWVTAARC) is a signal peptide. Topologically, residues 28–146 (LQSQGVSLYI…VSEIRYEDLH (119 aa)) are extracellular. The region spanning 35 to 138 (LYIPQSAINA…QSGTILLRVS (104 aa)) is the Ig-like C2-type domain. 3 N-linked (GlcNAc...) asparagine glycosylation sites follow: Asn43, Asn87, and Asn101. Residues 147–167 (FVAVFFALLAAVAVVLISLMW) form a helical membrane-spanning segment. Topologically, residues 168–199 (VCNQCAYKFQRKRRYKLKESTTEEIEMKEVEC) are cytoplasmic. An important for CDC42-dependent filopodia induction region spans residues 169–185 (CNQCAYKFQRKRRYKLK).

In terms of assembly, can homooligomerize through cis interactions within the same cell membrane. N-glycosylated. As to expression, highly expressed in the central nervous system (CNS), with the highest expression in thalamus, hippocampus, cerebrum, midbrain and spinal cord. Also highly expressed in stomach, kidney and small intestine.

The protein localises to the cell membrane. The protein resides in the cell projection. It is found in the dendrite. Its subcellular location is the axon. In terms of biological role, cell adhesion-like membrane protein of the central nervous system (CNS) which modulates both the position and complexity of central neurons by altering their membrane morphology and dynamics. Involved in the formation of neuronal dendrites and protrusions including dendritic filopodia. In synaptogenesis, regulates synapse formation by altering dendritic spine morphology and actin distribution. Promotes formation of unstable neuronal spines such as thin and branched types. Regulates neuronal morphogenesis and migration during cortical development in the brain. In Mus musculus (Mouse), this protein is V-set and transmembrane domain-containing protein 5.